The sequence spans 761 residues: Proline-rich extensin-like protein EPR1 (761 aa).

Positions 1–24 (MRVPLIDFLRFLVLILSLSGASVA) are cleaved as a signal peptide. A 1; degenerate repeat occupies 63 to 77 (YSPPIYPPPIQKPPT). The interval 63 to 735 (YSPPIYPPPI…PPVQVPPTPT (673 aa)) is 40 X 17 AA approximate tandem repeats of Y-S-P-P-[IV]-[KY]-P-P-P-x(1,2)-K-P-P-T-P-T. 39 consecutive repeat copies span residues 78–94 (YSPP…PTPT), 95–111 (YSPP…PTPT), 112–128 (YSPP…PTPT), 129–145 (YSPP…PTPS), 146–162 (YSPP…PTPT), 163–179 (YSPP…PTPT), 180–195 (YSPP…PTPI), 196–212 (YSPP…PTPI), 213–229 (YSPP…PTPT), 230–246 (YSPP…PTPI), 247–263 (YSPP…PTPI), 264–280 (YSPP…PTPI), 281–297 (YSPP…PTPT), 298–314 (YSPP…PTPT), 315–331 (YSPP…PTPT), 332–347 (YSPP…PTPI), 348–364 (YSPP…PTPI), 365–381 (YSPP…PTPI), 382–398 (YSPP…PTPT), 399–415 (YSPP…PTPT), 416–431 (YSPP…PTPI), 432–448 (YSPP…PTPI), 449–465 (YSPP…PTPT), 466–481 (YSPP…PTPT), 482–498 (YSPP…PTPT), 499–515 (YSPP…PTPT), 516–531 (YSPP…PTPT), 532–548 (YSPP…PTPT), 549–565 (YSPP…PTPT), 566–582 (YSPP…PTPT), 583–599 (YSPP…PTPT), 600–616 (YSPP…PTPT), 617–633 (YSPP…PTPT), 634–650 (YSPP…PTPT), 651–667 (YSPP…PTPT), 668–684 (YSPP…PTPT), 685–701 (YSPP…PTPT), 702–718 (YSPP…PTPT), and 719–735 (YSPP…PTPT). Over residues 111-750 (TYSPPIYPPP…QGGYGTPPPY (640 aa)) the composition is skewed to pro residues. Residues 111–761 (TYSPPIYPPP…YLSHPIDIRN (651 aa)) are disordered.

The protein belongs to the extensin family. As to expression, specifically expressed in endosperm during seed germination, at the site of radicle protrusion.

The protein localises to the secreted. Its subcellular location is the primary cell wall. In terms of biological role, may have a specific role in modifying the cell-wall structure, specifically during seed germination, thus facilitating radicle protrusion. The sequence is that of Proline-rich extensin-like protein EPR1 (EPR1) from Arabidopsis thaliana (Mouse-ear cress).